Reading from the N-terminus, the 162-residue chain is Nascent polypeptide-associated complex subunit beta (162 aa).

2 disordered regions span residues 1 to 39 (MPVD…NISE) and 130 to 162 (EQAK…DNVE). The segment covering 24 to 33 (TPRRPGKKVA) has biased composition (basic residues). The NAC-A/B domain occupies 38–103 (SEDEKKLSAT…SQQKDIAELI (66 aa)). The segment covering 146 to 162 (GDDEIPNLVENFEDNVE) has biased composition (acidic residues).

It belongs to the NAC-beta family. In terms of assembly, part of the nascent polypeptide-associated complex (NAC), consisting of EGD2 and EGD1. NAC associates with ribosomes via EGD1.

The protein localises to the cytoplasm. The protein resides in the nucleus. Its function is as follows. Component of the nascent polypeptide-associated complex (NAC), a dynamic component of the ribosomal exit tunnel, protecting the emerging polypeptides from interaction with other cytoplasmic proteins to ensure appropriate nascent protein targeting. The NAC complex also promotes mitochondrial protein import by enhancing productive ribosome interactions with the outer mitochondrial membrane and blocks the inappropriate interaction of ribosomes translating non-secretory nascent polypeptides with translocation sites in the membrane of the endoplasmic reticulum. EGD1 may act as a transcription factor that exert a negative effect on the expression of several genes that are transcribed by RNA polymerase II. This chain is Nascent polypeptide-associated complex subunit beta (EGD1), found in Yarrowia lipolytica (strain CLIB 122 / E 150) (Yeast).